Reading from the N-terminus, the 560-residue chain is Cytosolic purine 5'-nucleotidase (560 aa).

Asp-52 functions as the Nucleophile in the catalytic mechanism. Positions 52 and 54 each coordinate IMP. Positions 52 and 54 each coordinate Mg(2+). Catalysis depends on Asp-54, which acts as the Proton donor. Residues Arg-144 and Asn-154 each contribute to the ATP site. 7 residues coordinate IMP: Arg-202, Asp-206, Lys-215, Thr-249, Asn-250, Ser-251, and Lys-292. Residue Asp-351 participates in Mg(2+) binding. A Phosphoserine modification is found at Ser-418. ATP contacts are provided by Gln-453 and Arg-456. Residues Ser-502, Ser-511, and Ser-527 each carry the phosphoserine modification. Positions 541-560 are disordered; sequence PQEITHCHDEDDDEEEEEEE. The interval 548-560 is required for tetramer assembly; it reads HDEDDDEEEEEEE. The segment covering 550 to 560 has biased composition (acidic residues); the sequence is EDDDEEEEEEE.

The protein belongs to the 5'(3')-deoxyribonucleotidase family. As to quaternary structure, homotetramer. Mg(2+) serves as cofactor.

The protein resides in the cytoplasm. It localises to the cytosol. The enzyme catalyses a ribonucleoside 5'-phosphate + H2O = a ribonucleoside + phosphate. It catalyses the reaction a 2'-deoxyribonucleoside + a ribonucleoside 5'-phosphate = a ribonucleoside + a 2'-deoxyribonucleoside 5'-phosphate. The catalysed reaction is IMP + H2O = inosine + phosphate. It carries out the reaction GMP + H2O = guanosine + phosphate. The enzyme catalyses dIMP + H2O = 2'-deoxyinosine + phosphate. It catalyses the reaction dGMP + H2O = 2'-deoxyguanosine + phosphate. The catalysed reaction is XMP + H2O = xanthosine + phosphate. It carries out the reaction inosine + GMP = guanosine + IMP. The enzyme catalyses dGMP + inosine = 2'-deoxyguanosine + IMP. It catalyses the reaction dIMP + inosine = 2'-deoxyinosine + IMP. The catalysed reaction is inosine + UMP = uridine + IMP. It carries out the reaction inosine + CMP = cytidine + IMP. The enzyme catalyses inosine + AMP = IMP + adenosine. Allosterically activated by various compounds including ATP, 2,3-BPG/2,3-Bisphosphoglyceric acid and Ap4A/P1,P4-bis(5'-adenosyl) tetraphosphate. Binding of an allosteric activator is a prerequisiste to magnesium and substrate binding. Inhibited by inorganic phosphate. In terms of biological role, broad specificity cytosolic 5'-nucleotidase that catalyzes the dephosphorylation of 6-hydroxypurine nucleoside 5'-monophosphates. In addition, possesses a phosphotransferase activity by which it can transfer a phosphate from a donor nucleoside monophosphate to an acceptor nucleoside, preferably inosine, deoxyinosine and guanosine. Has the highest activities for IMP and GMP followed by dIMP, dGMP and XMP. Could also catalyze the transfer of phosphates from pyrimidine monophosphates but with lower efficiency. Through these activities regulates the purine nucleoside/nucleotide pools within the cell. The protein is Cytosolic purine 5'-nucleotidase of Bos taurus (Bovine).